The following is a 266-amino-acid chain: Beta-lactamase OXA-19 (266 aa).

Residues 1-20 (MKTFAAYVITACLSSTALAS) form the signal peptide. Ser-67 acts as the Acyl-ester intermediate in catalysis. The residue at position 70 (Lys-70) is an N6-carboxylysine. Residue 205–207 (KTG) coordinates substrate.

This sequence belongs to the class-D beta-lactamase family.

It catalyses the reaction a beta-lactam + H2O = a substituted beta-amino acid. The sequence is that of Beta-lactamase OXA-19 (bla) from Pseudomonas aeruginosa.